A 172-amino-acid chain; its full sequence is Large ribosomal subunit protein uL10 (172 aa).

Belongs to the universal ribosomal protein uL10 family. As to quaternary structure, part of the ribosomal stalk of the 50S ribosomal subunit. The N-terminus interacts with L11 and the large rRNA to form the base of the stalk. The C-terminus forms an elongated spine to which L12 dimers bind in a sequential fashion forming a multimeric L10(L12)X complex.

Forms part of the ribosomal stalk, playing a central role in the interaction of the ribosome with GTP-bound translation factors. This Liberibacter africanus subsp. capensis protein is Large ribosomal subunit protein uL10 (rplJ).